The primary structure comprises 1052 residues: Kruppel-like factor 18 (1052 aa).

3 consecutive C2H2-type zinc fingers follow at residues 964 to 988, 994 to 1018, and 1024 to 1046; these read YVCTYEDCKMSYSKACHLRTHMRKH, YVCDVEGCTWKFARSDELNRHKKRH, and YLCSICSKNFARSDHLKQHAKVH.

The protein belongs to the krueppel C2H2-type zinc-finger protein family.

It is found in the nucleus. In Homo sapiens (Human), this protein is Kruppel-like factor 18.